The chain runs to 47 residues: Cytochrome b559 subunit beta (47 aa).

Residues 23-39 (WLAVHALAIPSVFFLGA) form a helical membrane-spanning segment. His27 is a heme binding site.

The protein belongs to the PsbE/PsbF family. In terms of assembly, heterodimer of an alpha subunit and a beta subunit. PSII is composed of 1 copy each of membrane proteins PsbA, PsbB, PsbC, PsbD, PsbE, PsbF, PsbH, PsbI, PsbJ, PsbK, PsbL, PsbM, PsbT, PsbX, PsbY, Psb30/Ycf12, peripheral proteins PsbO, CyanoQ (PsbQ), PsbU, PsbV and a large number of cofactors. It forms dimeric complexes. Heme b serves as cofactor.

It is found in the cellular thylakoid membrane. Its function is as follows. This b-type cytochrome is tightly associated with the reaction center of photosystem II (PSII). PSII is a light-driven water:plastoquinone oxidoreductase that uses light energy to abstract electrons from H(2)O, generating O(2) and a proton gradient subsequently used for ATP formation. It consists of a core antenna complex that captures photons, and an electron transfer chain that converts photonic excitation into a charge separation. The chain is Cytochrome b559 subunit beta from Prochlorococcus marinus subsp. pastoris (strain CCMP1986 / NIES-2087 / MED4).